Reading from the N-terminus, the 103-residue chain is Floral defensin-like protein 1 (103 aa).

Residues 1 to 25 (MARSICFFAVAILALMLFAAYDAEA) form the signal peptide. 5 disulfides stabilise this stretch: Cys28/Cys72, Cys32/Cys48, Cys39/Cys59, Cys45/Cys66, and Cys49/Cys68. A propeptide spans 73 to 103 (VFEKTEATQTETFTKDVNTLAEALLEADMMV) (removed in mature form).

This sequence belongs to the DEFL family. When compared to other plant defensins, the petunia defensins have an additional fifth disulfide bond. As to expression, petals.

It is found in the secreted. It localises to the vacuole. Its function is as follows. Plant defense peptide with antifungal activity against F.oxysporum and B.cinerea. In Petunia hybrida (Petunia), this protein is Floral defensin-like protein 1 (D1).